A 200-amino-acid polypeptide reads, in one-letter code: Pyridoxine/pyridoxamine 5'-phosphate oxidase (200 aa).

Residues 49–54 (RMLLLK), 64–65 (YT), R70, K71, and Q93 each bind FMN. K54 serves as a coordination point for substrate. Substrate-binding residues include Y111, R115, and S119. FMN is bound by residues 128–129 (QS) and W173. Residue 179 to 181 (RLH) participates in substrate binding. FMN is bound at residue R183.

This sequence belongs to the pyridoxamine 5'-phosphate oxidase family. As to quaternary structure, homodimer. The cofactor is FMN.

It carries out the reaction pyridoxamine 5'-phosphate + O2 + H2O = pyridoxal 5'-phosphate + H2O2 + NH4(+). It catalyses the reaction pyridoxine 5'-phosphate + O2 = pyridoxal 5'-phosphate + H2O2. It participates in cofactor metabolism; pyridoxal 5'-phosphate salvage; pyridoxal 5'-phosphate from pyridoxamine 5'-phosphate: step 1/1. The protein operates within cofactor metabolism; pyridoxal 5'-phosphate salvage; pyridoxal 5'-phosphate from pyridoxine 5'-phosphate: step 1/1. Functionally, catalyzes the oxidation of either pyridoxine 5'-phosphate (PNP) or pyridoxamine 5'-phosphate (PMP) into pyridoxal 5'-phosphate (PLP). The sequence is that of Pyridoxine/pyridoxamine 5'-phosphate oxidase from Gluconobacter oxydans (strain 621H) (Gluconobacter suboxydans).